Consider the following 522-residue polypeptide: Maturase K (522 aa).

The protein belongs to the intron maturase 2 family. MatK subfamily.

Its subcellular location is the plastid. It localises to the chloroplast. Its function is as follows. Usually encoded in the trnK tRNA gene intron. Probably assists in splicing its own and other chloroplast group II introns. This is Maturase K from Aristea glauca.